The chain runs to 295 residues: Glutamyl-Q tRNA(Asp) synthetase (295 aa).

Residues 9–13 and E45 contribute to the L-glutamate site; that span reads RFAPT. Positions 12 to 22 match the 'HIGH' region motif; that stretch reads PTPSGFLHFGS. Zn(2+) is bound by residues C101, C103, Y115, and C119. The L-glutamate site is built by Y172 and R190. Positions 228-232 match the 'KMSKS' region motif; that stretch reads KLGKS. ATP is bound at residue K231.

This sequence belongs to the class-I aminoacyl-tRNA synthetase family. GluQ subfamily. Requires Zn(2+) as cofactor.

Catalyzes the tRNA-independent activation of glutamate in presence of ATP and the subsequent transfer of glutamate onto a tRNA(Asp). Glutamate is transferred on the 2-amino-5-(4,5-dihydroxy-2-cyclopenten-1-yl) moiety of the queuosine in the wobble position of the QUC anticodon. This is Glutamyl-Q tRNA(Asp) synthetase from Pseudomonas putida (strain GB-1).